Consider the following 512-residue polypeptide: MVTRDETAEAEGLRPAVGSSRVRTYQVRTYGCQMNVHDSERLSGLLESAGYQRAAEGTDADIVVFNTCAVRENADNKLYGNLSHLAPRKQADPNMQIAVGGCLAQKDRDAVLRRAPWVDVVFGTHNIGSLPTLLERARHNREAQVEIVEALQEFPSALPASRESAYAAWVSISVGCNNTCTFCIVPSLRGKEVDRRPGDILAEVQSLVDQGVLEITLLGQNVNAYGVSFADPELPRDRGAFAKLLRACGGIDGLERVRFTSPHPAEFTDDVIEAMAATPNVCPTLHMPLQSGSDRILKAMRRSYRAERFLGIIDKVRAAIPHAAITTDLIVGFPGETEEDFQATLDVVEQARFAGAFTFQYSKRPGTPAADMPDQLPKSVVTERYQRLIELQERISLEQNREQVGRAVELLVATGEGRKDASTARMSGRARDGRLVHFLPGDNEIRPGDIVTTTVTGAAPHHLIADAPIIERRRTRAGDAHAAGQKPRTGVGLGMPRIGAPAPSATAEGCGC.

Positions 23 to 139 (RTYQVRTYGC…LPTLLERARH (117 aa)) constitute an MTTase N-terminal domain. Residues Cys-32, Cys-68, Cys-102, Cys-176, Cys-180, and Cys-183 each contribute to the [4Fe-4S] cluster site. Residues 162–398 (RESAYAAWVS…IELQERISLE (237 aa)) form the Radical SAM core domain. The TRAM domain maps to 401–469 (REQVGRAVEL…PHHLIADAPI (69 aa)). Residues 477 to 512 (AGDAHAAGQKPRTGVGLGMPRIGAPAPSATAEGCGC) form a disordered region.

This sequence belongs to the methylthiotransferase family. MiaB subfamily. Monomer. [4Fe-4S] cluster serves as cofactor.

The protein localises to the cytoplasm. The enzyme catalyses N(6)-dimethylallyladenosine(37) in tRNA + (sulfur carrier)-SH + AH2 + 2 S-adenosyl-L-methionine = 2-methylsulfanyl-N(6)-dimethylallyladenosine(37) in tRNA + (sulfur carrier)-H + 5'-deoxyadenosine + L-methionine + A + S-adenosyl-L-homocysteine + 2 H(+). In terms of biological role, catalyzes the methylthiolation of N6-(dimethylallyl)adenosine (i(6)A), leading to the formation of 2-methylthio-N6-(dimethylallyl)adenosine (ms(2)i(6)A) at position 37 in tRNAs that read codons beginning with uridine. In Mycolicibacterium smegmatis (strain ATCC 700084 / mc(2)155) (Mycobacterium smegmatis), this protein is tRNA-2-methylthio-N(6)-dimethylallyladenosine synthase.